We begin with the raw amino-acid sequence, 430 residues long: Enolase (430 aa).

Gln-167 contributes to the (2R)-2-phosphoglycerate binding site. The active-site Proton donor is the Glu-209. Residues Asp-246, Glu-289, and Asp-316 each coordinate Mg(2+). (2R)-2-phosphoglycerate contacts are provided by Lys-341, Arg-370, Ser-371, and Lys-392. The active-site Proton acceptor is Lys-341.

The protein belongs to the enolase family. In terms of assembly, component of the RNA degradosome, a multiprotein complex involved in RNA processing and mRNA degradation. Mg(2+) serves as cofactor.

It is found in the cytoplasm. Its subcellular location is the secreted. The protein localises to the cell surface. The catalysed reaction is (2R)-2-phosphoglycerate = phosphoenolpyruvate + H2O. It functions in the pathway carbohydrate degradation; glycolysis; pyruvate from D-glyceraldehyde 3-phosphate: step 4/5. Its function is as follows. Catalyzes the reversible conversion of 2-phosphoglycerate (2-PG) into phosphoenolpyruvate (PEP). It is essential for the degradation of carbohydrates via glycolysis. The protein is Enolase of Alcanivorax borkumensis (strain ATCC 700651 / DSM 11573 / NCIMB 13689 / SK2).